The sequence spans 335 residues: Urokinase plasminogen activator surface receptor (335 aa).

The first 22 residues, 1 to 22, serve as a signal peptide directing secretion; sequence MGHPPLLPLLLLLHTCVPASWG. UPAR/Ly6 domains follow at residues 23 to 114, 115 to 213, and 214 to 305; these read LRCM…RSRY, LECI…PQNG, and RQCY…YRSG. 3 disulfides stabilise this stretch: Cys-25/Cys-46, Cys-28/Cys-34, and Cys-39/Cys-67. The N-linked (GlcNAc...) asparagine glycan is linked to Asn-74. 11 cysteine pairs are disulfide-bonded: Cys-93–Cys-98, Cys-117–Cys-144, Cys-120–Cys-127, Cys-137–Cys-169, Cys-175–Cys-192, Cys-193–Cys-198, Cys-216–Cys-244, Cys-219–Cys-227, Cys-237–Cys-263, Cys-269–Cys-287, and Cys-288–Cys-293. N-linked (GlcNAc...) asparagine glycosylation is present at Asn-124. Residues Asn-184, Asn-194, Asn-222, and Asn-255 are each glycosylated (N-linked (GlcNAc...) asparagine). Residue Gly-305 is the site of GPI-anchor amidated glycine attachment. Positions 306–335 are cleaved as a propeptide — removed in mature form; it reads AAPQPGPAHLSLTITLLMTARLWGGTLLWT.

As to quaternary structure, monomer. Interacts (via the UPAR/Ly6 domains) with SRPX2. Interacts with MRC2. Interacts with FAP (seprase); the interaction occurs at the cell surface of invadopodia membrane. Interacts with SORL1 (via N-terminal ectodomain); this interaction decreases PLAUR internalization. The ternary complex composed of PLAUR-PLAU-SERPINE1 also interacts with SORL1. Interacts with CD82; this interaction prevents PLAUR from binding to its high affinity ligand PLAU.

The protein localises to the cell membrane. It is found in the cell projection. Its subcellular location is the invadopodium membrane. In terms of biological role, acts as a receptor for urokinase plasminogen activator. Plays a role in localizing and promoting plasmin formation. Mediates the proteolysis-independent signal transduction activation effects of U-PA. It is subject to negative-feedback regulation by U-PA which cleaves it into an inactive form. This is Urokinase plasminogen activator surface receptor (PLAUR) from Pan troglodytes (Chimpanzee).